The following is a 463-amino-acid chain: Asparagine--tRNA ligase (463 aa).

Belongs to the class-II aminoacyl-tRNA synthetase family. Homodimer.

The protein resides in the cytoplasm. The enzyme catalyses tRNA(Asn) + L-asparagine + ATP = L-asparaginyl-tRNA(Asn) + AMP + diphosphate + H(+). The protein is Asparagine--tRNA ligase of Bacillus cereus (strain ATCC 10987 / NRS 248).